We begin with the raw amino-acid sequence, 700 residues long: Interleukin-1 receptor accessory protein-like 1-B (700 aa).

An N-terminal signal peptide occupies residues 1–18; the sequence is MRSRVPLQILLYAAVIRS. At 19-357 the chain is on the extracellular side; it reads LKVVSKRGSV…QLSRRELMYT (339 aa). In terms of domain architecture, Ig-like C2-type 1 spans 32-134; that stretch reads TDWSVDYLRY…YCMKVSMALT (103 aa). Cys-53 and Cys-118 are joined by a disulfide. Residues Asn-63, Asn-122, Asn-138, Asn-213, Asn-264, and Asn-331 are each glycosylated (N-linked (GlcNAc...) asparagine). Ig-like C2-type domains follow at residues 143-232 and 242-350; these read CYNS…TELT and PKIL…IQLS. Cys-164 and Cys-216 are disulfide-bonded. An intrachain disulfide couples Cys-267 to Cys-334. Residues 358 to 378 traverse the membrane as a helical segment; that stretch reads VELAGGLGAILLMLIFLVSLY. Topologically, residues 379–700 are cytoplasmic; the sequence is KCYRIELMLF…RETSISSVIW (322 aa). The 157-residue stretch at 403–559 folds into the TIR domain; that stretch reads KDYDAYVSYT…RFWKQLQYEM (157 aa). Residue Glu-491 is part of the active site. The required for synaptic vesicle accumulation during synaptogenesis stretch occupies residues 564 to 700; sequence PEPKLSHEQV…RETSISSVIW (137 aa).

The protein belongs to the interleukin-1 receptor family.

Its subcellular location is the cell membrane. The protein resides in the cytoplasm. The catalysed reaction is NAD(+) + H2O = ADP-D-ribose + nicotinamide + H(+). In terms of biological role, may regulate secretion and presynaptic differentiation through inhibition of the activity of N-type voltage-gated calcium channel. During presynaptic differentiation may regulate both synaptic vesicle accumulation in axon terminals and subsequent axon terminal remodeling. The polypeptide is Interleukin-1 receptor accessory protein-like 1-B (il1rapl1b) (Danio rerio (Zebrafish)).